The following is a 106-amino-acid chain: UPF0145 protein SCO3412 (106 aa).

This sequence belongs to the UPF0145 family.

The chain is UPF0145 protein SCO3412 from Streptomyces coelicolor (strain ATCC BAA-471 / A3(2) / M145).